The following is a 231-amino-acid chain: Probable transglycosylase SceD (231 aa).

Positions 1 to 27 are cleaved as a signal peptide; the sequence is MKKTLLASSLAVGLGIVAGNAGHEAHA. Residues 106–116 are compositionally biased toward polar residues; it reads AVQANQVQSQE. Positions 106-153 are disordered; the sequence is AVQANQVQSQEVEAPQNAQTQQPQASTSNNSQVTATPTESKSSEGSSV. A compositionally biased stretch (low complexity) spans 119–137; the sequence is APQNAQTQQPQASTSNNSQ. Over residues 138–153 the composition is skewed to polar residues; the sequence is VTATPTESKSSEGSSV.

Belongs to the transglycosylase family. SceD subfamily.

Its subcellular location is the secreted. Its function is as follows. Is able to cleave peptidoglycan and affects clumping and separation of bacterial cells. This Staphylococcus aureus (strain USA300) protein is Probable transglycosylase SceD (sceD).